Here is a 240-residue protein sequence, read N- to C-terminus: UDP-2,3-diacylglucosamine hydrolase (240 aa).

Mn(2+)-binding residues include D8, H10, D41, N79, and H114. Substrate is bound at residue 79-80; the sequence is NR. The substrate site is built by D122, S160, N164, K167, and H195. Mn(2+) contacts are provided by H195 and H197.

This sequence belongs to the LpxH family. Requires Mn(2+) as cofactor.

The protein resides in the cell inner membrane. It carries out the reaction UDP-2-N,3-O-bis[(3R)-3-hydroxytetradecanoyl]-alpha-D-glucosamine + H2O = 2-N,3-O-bis[(3R)-3-hydroxytetradecanoyl]-alpha-D-glucosaminyl 1-phosphate + UMP + 2 H(+). Its pathway is glycolipid biosynthesis; lipid IV(A) biosynthesis; lipid IV(A) from (3R)-3-hydroxytetradecanoyl-[acyl-carrier-protein] and UDP-N-acetyl-alpha-D-glucosamine: step 4/6. Hydrolyzes the pyrophosphate bond of UDP-2,3-diacylglucosamine to yield 2,3-diacylglucosamine 1-phosphate (lipid X) and UMP by catalyzing the attack of water at the alpha-P atom. Involved in the biosynthesis of lipid A, a phosphorylated glycolipid that anchors the lipopolysaccharide to the outer membrane of the cell. This is UDP-2,3-diacylglucosamine hydrolase from Escherichia coli O127:H6 (strain E2348/69 / EPEC).